The following is a 122-amino-acid chain: UPF0382 membrane protein SERP0230 (122 aa).

Transmembrane regions (helical) follow at residues 3–23 (VFII…AFGA), 46–66 (MYHG…SINV), 69–89 (AGWL…FLAL), and 98–118 (ITPI…IATL).

The protein belongs to the UPF0382 family.

It is found in the cell membrane. The protein is UPF0382 membrane protein SERP0230 of Staphylococcus epidermidis (strain ATCC 35984 / DSM 28319 / BCRC 17069 / CCUG 31568 / BM 3577 / RP62A).